The chain runs to 106 residues: Large ribosomal subunit protein eL30 (106 aa).

The protein belongs to the eukaryotic ribosomal protein eL30 family.

The polypeptide is Large ribosomal subunit protein eL30 (Methanococcus maripaludis (strain C7 / ATCC BAA-1331)).